Reading from the N-terminus, the 314-residue chain is Ribonuclease Z (314 aa).

Residues histidine 61, histidine 63, aspartate 65, histidine 66, histidine 137, aspartate 207, and histidine 263 each coordinate Zn(2+). Aspartate 65 functions as the Proton acceptor in the catalytic mechanism.

The protein belongs to the RNase Z family. In terms of assembly, homodimer. Zn(2+) serves as cofactor.

It carries out the reaction Endonucleolytic cleavage of RNA, removing extra 3' nucleotides from tRNA precursor, generating 3' termini of tRNAs. A 3'-hydroxy group is left at the tRNA terminus and a 5'-phosphoryl group is left at the trailer molecule.. In terms of biological role, zinc phosphodiesterase, which displays some tRNA 3'-processing endonuclease activity. Probably involved in tRNA maturation, by removing a 3'-trailer from precursor tRNA. The sequence is that of Ribonuclease Z from Thermococcus kodakarensis (strain ATCC BAA-918 / JCM 12380 / KOD1) (Pyrococcus kodakaraensis (strain KOD1)).